Here is a 307-residue protein sequence, read N- to C-terminus: Major pollen allergen Lol p 5a (307 aa).

The signal sequence occupies residues 1–25; the sequence is MAVQKYTVALFLAVALVAGPAASYA.

The protein belongs to the Poa p IX/Phl p VI allergen family. As to expression, pollen, starch granules.

This Lolium perenne (Perennial ryegrass) protein is Major pollen allergen Lol p 5a (LOLPIB).